Here is a 92-residue protein sequence, read N- to C-terminus: Small ribosomal subunit protein uS19 (92 aa).

Belongs to the universal ribosomal protein uS19 family.

Protein S19 forms a complex with S13 that binds strongly to the 16S ribosomal RNA. The polypeptide is Small ribosomal subunit protein uS19 (Bartonella bacilliformis (strain ATCC 35685 / KC583 / Herrer 020/F12,63)).